The following is a 124-amino-acid chain: Small ribosomal subunit protein uS12 (124 aa).

Residues methionine 1 to glutamate 25 form a disordered region. At aspartate 89 the chain carries 3-methylthioaspartic acid. Residues threonine 104–serine 124 are disordered. Positions lysine 111–serine 124 are enriched in basic residues.

This sequence belongs to the universal ribosomal protein uS12 family. Part of the 30S ribosomal subunit. Contacts proteins S8 and S17. May interact with IF1 in the 30S initiation complex.

With S4 and S5 plays an important role in translational accuracy. In terms of biological role, interacts with and stabilizes bases of the 16S rRNA that are involved in tRNA selection in the A site and with the mRNA backbone. Located at the interface of the 30S and 50S subunits, it traverses the body of the 30S subunit contacting proteins on the other side and probably holding the rRNA structure together. The combined cluster of proteins S8, S12 and S17 appears to hold together the shoulder and platform of the 30S subunit. This chain is Small ribosomal subunit protein uS12, found in Solibacter usitatus (strain Ellin6076).